An 818-amino-acid chain; its full sequence is LisH domain-containing protein ARMC9 (818 aa).

In terms of domain architecture, LisH spans 7-39 (HESELLGLVKEYLDFAEFEDTLKTFSKECKIKG). The stretch at 204–230 (QSNKEILQQLHQQLVEAERRSVTYLKR) forms a coiled coil. The residue at position 582 (Ser582) is a Phosphoserine. Disordered stretches follow at residues 642-755 (VQWS…TTRE) and 790-818 (SSCG…SHRK). Over residues 701 to 711 (STPESCVSSSS) the composition is skewed to low complexity. Residues 792–818 (CGPQQASRPGSTASSTRGLPSSQSHRK) show a composition bias toward polar residues.

As to quaternary structure, interacts with TOGARAM1, CCDC66, CEP104, CSPP1 and CEP290. Interacts with NDUFAF2. In terms of tissue distribution, strongly expressed in most melanomas and melanocytes. Weakly expressed in the testis.

It is found in the cytoplasm. The protein localises to the cytoskeleton. The protein resides in the cilium basal body. It localises to the cell projection. Its subcellular location is the cilium. It is found in the microtubule organizing center. The protein localises to the centrosome. The protein resides in the centriole. Involved in ciliogenesis. It is required for appropriate acetylation and polyglutamylation of ciliary microtubules, and regulation of cilium length. Acts as a positive regulator of hedgehog (Hh)signaling. May participate in the trafficking and/or retention of GLI2 and GLI3 proteins at the ciliary tip. The polypeptide is LisH domain-containing protein ARMC9 (Homo sapiens (Human)).